A 230-amino-acid polypeptide reads, in one-letter code: 7-cyano-7-deazaguanine synthase (230 aa).

Residue 10–20 (LSGGLDSATTA) participates in ATP binding. Residues C191, C199, C202, and C205 each coordinate Zn(2+).

The protein belongs to the QueC family. Zn(2+) serves as cofactor.

The enzyme catalyses 7-carboxy-7-deazaguanine + NH4(+) + ATP = 7-cyano-7-deazaguanine + ADP + phosphate + H2O + H(+). It participates in purine metabolism; 7-cyano-7-deazaguanine biosynthesis. In terms of biological role, catalyzes the ATP-dependent conversion of 7-carboxy-7-deazaguanine (CDG) to 7-cyano-7-deazaguanine (preQ(0)). The chain is 7-cyano-7-deazaguanine synthase from Gloeothece citriformis (strain PCC 7424) (Cyanothece sp. (strain PCC 7424)).